A 795-amino-acid chain; its full sequence is RINT1-like protein MAG2 (795 aa).

Residues 35 to 64 adopt a coiled-coil conformation; the sequence is TGLVSELQTEISELDQRLAGLNRQLESGLA. Residues 91–111 are disordered; sequence TSVTRSASDSGKEEEATEHVA. The span at 100 to 111 shows a compositional bias: basic and acidic residues; the sequence is SGKEEEATEHVA. Positions 207–795 constitute an RINT1/TIP20 domain; the sequence is ALAMMRPQAI…KKVAKSRVFS (589 aa).

This sequence belongs to the RINT1 family. Interacts with SEC20 and SYP81. Interacts with ZW10 (via the central region). Forms a complex with ZW10/MIP1, MIP2 and MIP3 on the endoplasmic reticulum. In terms of tissue distribution, highly expressed in dry seeds. Expressed at low levels in roots, rosette and cauline leaves, stems and flowers.

It is found in the endoplasmic reticulum membrane. In terms of biological role, functions in the anterograde transport of storage protein precursors from the endoplasmic reticulum (ER) to the Golgi complex and in the retrograde transport from the Golgi complex to the ER. Forms a complex with ZW10/MIP1, MIP2 and MIP3 on the ER that may be responsible for efficient transport of seed storage proteins. Required for the responses to environmental stresses during seed germination and vegetative growth. Probably not involved in the retrograde transport from the ER to the apoplast. The protein is RINT1-like protein MAG2 of Arabidopsis thaliana (Mouse-ear cress).